The following is a 347-amino-acid chain: 4-hydroxy-2-oxovalerate aldolase (347 aa).

Positions isoleucine 2–methionine 252 constitute a Pyruvate carboxyltransferase domain. A substrate-binding site is contributed by arginine 10–aspartate 11. Aspartate 11 serves as a coordination point for Mn(2+). Residue histidine 14 is the Proton acceptor of the active site. Substrate contacts are provided by serine 164 and histidine 191. Mn(2+) contacts are provided by histidine 191 and histidine 193.

Belongs to the 4-hydroxy-2-oxovalerate aldolase family.

It catalyses the reaction (S)-4-hydroxy-2-oxopentanoate = acetaldehyde + pyruvate. In Burkholderia pseudomallei (strain 1106a), this protein is 4-hydroxy-2-oxovalerate aldolase.